The following is a 161-amino-acid chain: MPSMDIVSEVDEEELRNAVENSRREVAGRFDLRGKEIEIDLKDNVVTLKSEDDFICKQLVDILRIQLSKRNVDPSSMEVDEKAVHSGKTFSLKVNFKQGIDSLVAKKLVKAIKDSKLKVQAAIQGDSVRITGKKRDDLQAVMRLAKESELGQPFQFDNFRD.

It belongs to the YajQ family.

In terms of biological role, nucleotide-binding protein. This chain is Nucleotide-binding protein Sfri_0732, found in Shewanella frigidimarina (strain NCIMB 400).